Here is a 345-residue protein sequence, read N- to C-terminus: Uroporphyrinogen decarboxylase (345 aa).

Substrate contacts are provided by residues 27 to 31 (RQAGR), Phe46, Asp76, Tyr152, Ser207, and His321.

The protein belongs to the uroporphyrinogen decarboxylase family. As to quaternary structure, homodimer.

The protein resides in the cytoplasm. The enzyme catalyses uroporphyrinogen III + 4 H(+) = coproporphyrinogen III + 4 CO2. It functions in the pathway porphyrin-containing compound metabolism; protoporphyrin-IX biosynthesis; coproporphyrinogen-III from 5-aminolevulinate: step 4/4. Functionally, catalyzes the decarboxylation of four acetate groups of uroporphyrinogen-III to yield coproporphyrinogen-III. The protein is Uroporphyrinogen decarboxylase of Staphylococcus aureus (strain MRSA252).